The chain runs to 280 residues: Large ribosomal subunit protein uL2 (280 aa).

The tract at residues glycine 215 to lysine 280 is disordered.

The protein belongs to the universal ribosomal protein uL2 family. In terms of assembly, part of the 50S ribosomal subunit. Forms a bridge to the 30S subunit in the 70S ribosome.

Functionally, one of the primary rRNA binding proteins. Required for association of the 30S and 50S subunits to form the 70S ribosome, for tRNA binding and peptide bond formation. It has been suggested to have peptidyltransferase activity; this is somewhat controversial. Makes several contacts with the 16S rRNA in the 70S ribosome. In Dictyoglomus thermophilum (strain ATCC 35947 / DSM 3960 / H-6-12), this protein is Large ribosomal subunit protein uL2.